The following is a 326-amino-acid chain: Olfactory receptor 10X1 (326 aa).

The Extracellular segment spans residues 1–41 (MVLNVYCCFFQISDIQTMKINQTILKEFILVGFSVYPHVQT). A glycan (N-linked (GlcNAc...) asparagine) is linked at asparagine 21. Residues 42–62 (FLFVVFFCLYLLTLAGNLIIM) traverse the membrane as a helical segment. Residues 63-70 (GLTWVDRS) are Cytoplasmic-facing. Residues 71 to 91 (LHTPMYLFLSALSFSETCYTL) traverse the membrane as a helical segment. Residues 92-115 (TIVPKMLEDLLAKDRSISVTGCSL) are Extracellular-facing. An intrachain disulfide couples cysteine 113 to cysteine 205. A helical membrane pass occupies residues 116–136 (QMCFFLGLGGTNCIILTLMGY). Over 137 to 155 (DRFLAICNPLRYPLLMTNI) the chain is Cytoplasmic. A helical membrane pass occupies residues 156-176 (VCGQLVASACTAGFFISLTET). Residues 177–213 (ALIFRDSFCRPNLVKHFFCHMLAVIRLSCIDSNHTEF) are Extracellular-facing. N-linked (GlcNAc...) asparagine glycosylation is present at asparagine 209. The chain crosses the membrane as a helical span at residues 214-233 (IITLISVSGLLGTLLLIILT). The Cytoplasmic segment spans residues 234-253 (DVFIISTVLRIPSAEGKQKA). A helical membrane pass occupies residues 254-274 (FTTCASHLTVVIIHFGFASIV). The Extracellular portion of the chain corresponds to 275–284 (YLKPEASGDD). The chain crosses the membrane as a helical span at residues 285 to 305 (TLIAVPYTVITPFLSPIIFSL). The Cytoplasmic segment spans residues 306–326 (RNKDMKNAFRRMMGNTVALKK).

It belongs to the G-protein coupled receptor 1 family.

The protein localises to the cell membrane. Functionally, odorant receptor. This is Olfactory receptor 10X1 (OR10X1) from Homo sapiens (Human).